Consider the following 521-residue polypeptide: Ankyrin repeat and death domain-containing protein 1B (521 aa).

ANK repeat units lie at residues A60 to A89, M93 to V122, H126 to A155, E159 to Q190, R194 to E223, D227 to E256, L260 to Q289, S293 to V322, R326 to I355, and Q359 to W388. Positions T420–K508 constitute a Death domain.

This chain is Ankyrin repeat and death domain-containing protein 1B (Ankdd1b), found in Mus musculus (Mouse).